Reading from the N-terminus, the 152-residue chain is Natriuretic peptides A (152 aa).

Residues 1–24 form the signal peptide; it reads MGSSAITVSFLLFLAFQLPGQTGA. 2 propeptides span residues 25 to 122 and 92 to 102; these read NPVY…TAPR and EGGVLGRGPWE. Residues 58 to 101 form a disordered region; sequence PSQVLSEQNEEAGAPLSPLSEMPPWMGEVNPAQREGGVLGRGPW. Serine 128 carries the phosphoserine modification. Cysteines 129 and 145 form a disulfide. The important for degradation of atrial natriuretic peptide by IDE stretch occupies residues 146-150; sequence NSFRY.

It belongs to the natriuretic peptide family. In terms of assembly, homodimer; disulfide-linked antiparallel dimer. Post-translationally, the precursor molecule is proteolytically cleaved by CORIN at Arg-122 to produce the atrial natriuretic peptide. Undergoes further proteolytic cleavage by unknown proteases to give rise to long-acting natriuretic peptide, vessel dilator and kaliuretic peptide. Additional processing gives rise to the auriculin and atriopeptin peptides. In the kidneys, alternative processing by an unknown protease results in the peptide urodilatin. Cleavage by MME initiates degradation of the factor and thereby regulates its activity. Degradation by IDE results in reduced activation of NPR1 (in vitro). During IDE degradation, the resulting products can temporarily stimulate NPR2 to produce cGMP, before the fragments are completely degraded and inactivated by IDE (in vitro). In terms of processing, degraded by IDE. Post-translationally, phosphorylation on Ser-128 decreases vasorelaxant activity.

The protein resides in the secreted. Its subcellular location is the perikaryon. It is found in the cell projection. Hormone that plays a key role in mediating cardio-renal homeostasis, and is involved in vascular remodeling and regulating energy metabolism. Acts by specifically binding and stimulating NPR1 to produce cGMP, which in turn activates effector proteins, such as PRKG1, that drive various biological responses. Regulates vasodilation, natriuresis, diuresis and aldosterone synthesis and is therefore essential for regulating blood pressure, controlling the extracellular fluid volume and maintaining the fluid-electrolyte balance. Also involved in inhibiting cardiac remodeling and cardiac hypertrophy by inducing cardiomyocyte apoptosis and attenuating the growth of cardiomyocytes and fibroblasts. Plays a role in female pregnancy by promoting trophoblast invasion and spiral artery remodeling in uterus, and thus prevents pregnancy-induced hypertension. In adipose tissue, acts in various cGMP- and PKG-dependent pathways to regulate lipid metabolism and energy homeostasis. This includes up-regulating lipid metabolism and mitochondrial oxygen utilization by activating the AMP-activated protein kinase (AMPK), and increasing energy expenditure by acting via MAPK11 to promote the UCP1-dependent thermogenesis of brown adipose tissue. Binds the clearance receptor NPR3 which removes the hormone from circulation. Functionally, may have a role in cardio-renal homeostasis through regulation of natriuresis, diuresis, vasodilation, and inhibiting aldosterone synthesis. In vitro, promotes the production of cGMP and induces vasodilation. May promote natriuresis, at least in part, by enhancing prostaglandin E2 synthesis resulting in the inhibition of renal Na+-K+-ATPase. However reports on the involvement of this peptide in mammal blood volume and blood pressure homeostasis are conflicting; according to a report, in vivo it is not sufficient to activate cGMP and does not inhibit collecting duct transport nor effect diuresis and natriuresis. Appears to bind to specific receptors that are distinct from the receptors bound by atrial natriuretic peptide and vessel dilator. Possibly enhances protein excretion in urine by decreasing proximal tubular protein reabsorption. Its function is as follows. May have a role in cardio-renal homeostasis through regulation of natriuresis, diuresis, and vasodilation. In vitro, promotes the production of cGMP and induces vasodilation. May promote natriuresis, at least in part, by enhancing prostaglandin E2 synthesis resulting in the inhibition of renal Na+-K+-ATPase. However reports on the involvement of this peptide in mammal blood volume and blood pressure homeostasis are conflicting; according to a report it is not sufficient to activate cGMP and does not inhibit collecting duct transport nor effect diuresis and natriuresis. Appears to bind to specific receptors that are distinct from the receptors bound by the atrial natriuretic and long-acting natriuretic peptides. Possibly functions in protein excretion in urine by maintaining the integrity of the proximal tubules and enhancing protein excretion by decreasing proximal tubular protein reabsorption. In terms of biological role, may have a role in cardio-renal homeostasis through regulation of diuresis and inhibiting aldosterone synthesis. In vitro, promotes the production of cGMP and induces vasodilation. May promote natriuresis, at least in part, by enhancing prostaglandin E2 synthesis resulting in the inhibition of renal Na+-K+-ATPase. May have a role in potassium excretion but not sodium excretion (natriuresis). Possibly enhances protein excretion in urine by decreasing proximal tubular protein reabsorption. Hormone produced in the kidneys that appears to be important for maintaining cardio-renal homeostasis. Mediates vasodilation, natriuresis and diuresis primarily in the renal system, in order to maintain the extracellular fluid volume and control the fluid-electrolyte balance. Specifically binds and stimulates cGMP production by renal transmembrane receptors, likely NPR1. Urodilatin not ANP, may be the natriuretic peptide responsible for the regulation of sodium and water homeostasis in the kidney. Functionally, may have a role in cardio-renal homeostasis through regulation of natriuresis and vasodilation. In vivo promotes natriuresis and in vitro, vasodilates renal artery strips. Its function is as follows. May have a role in cardio-renal homeostasis through regulation of regulation of natriuresis and vasodilation. In vivo promotes natriuresis. In vitro, vasodilates intestinal smooth muscle but not smooth muscle strips. In terms of biological role, may have a role in cardio-renal homeostasis through regulation of natriuresis and vasodilation. In vivo promotes natriuresis. In vitro, selectively vasodilates intestinal and vascular smooth muscle strips. May have a role in cardio-renal homeostasis through regulation of natriuresis and vasodilation. In vivo promotes natriuresis. In vitro, selectively vasodilates intestinal smooth muscle but not vascular smooth muscle strips. In Bos taurus (Bovine), this protein is Natriuretic peptides A (NPPA).